A 182-amino-acid polypeptide reads, in one-letter code: Large ribosomal subunit protein uL10 (182 aa).

It belongs to the universal ribosomal protein uL10 family. Part of the ribosomal stalk of the 50S ribosomal subunit. The N-terminus interacts with L11 and the large rRNA to form the base of the stalk. The C-terminus forms an elongated spine to which L12 dimers bind in a sequential fashion forming a multimeric L10(L12)X complex.

In terms of biological role, forms part of the ribosomal stalk, playing a central role in the interaction of the ribosome with GTP-bound translation factors. This Koribacter versatilis (strain Ellin345) protein is Large ribosomal subunit protein uL10.